Here is a 564-residue protein sequence, read N- to C-terminus: Arginine--tRNA ligase (564 aa).

The short motif at 136 to 146 is the 'HIGH' region element; the sequence is ANPTGPLHMGN.

The protein belongs to the class-I aminoacyl-tRNA synthetase family. As to quaternary structure, monomer.

Its subcellular location is the cytoplasm. The catalysed reaction is tRNA(Arg) + L-arginine + ATP = L-arginyl-tRNA(Arg) + AMP + diphosphate. The polypeptide is Arginine--tRNA ligase (Ruminiclostridium cellulolyticum (strain ATCC 35319 / DSM 5812 / JCM 6584 / H10) (Clostridium cellulolyticum)).